Consider the following 254-residue polypeptide: U3 small nucleolar RNA-associated protein NOL7 (254 aa).

The disordered stretch occupies residues 1-90 (MVQLRPRLSR…ASARRDKTLL (90 aa)). Acidic residues-rich tracts occupy residues 18-31 (MVDE…EEEA) and 48-61 (PLDE…EAPE). A compositionally biased stretch (basic and acidic residues) spans 71–90 (EAREEELRVRASARRDKTLL). Lys-127 is covalently cross-linked (Glycyl lysine isopeptide (Lys-Gly) (interchain with G-Cter in SUMO2)). A Phosphoserine modification is found at Ser-129. A Glycyl lysine isopeptide (Lys-Gly) (interchain with G-Cter in SUMO2) cross-link involves residue Lys-157. A disordered region spans residues 235-254 (NAKRFKKRWMAKKMKKKTYK).

This sequence belongs to the UTP16 family. As to quaternary structure, part of the small subunit (SSU) processome, composed of more than 70 proteins and the RNA chaperone small nucleolar RNA (snoRNA) U3.

It is found in the nucleus. The protein localises to the nucleolus. In terms of biological role, functions as part of the small subunit (SSU) processome, first precursor of the small eukaryotic ribosomal subunit that coordinates the first two steps of ribosome biogenesis in transcription of the primary transcript pre-RNA and pre-18S processing. During the assembly of the SSU processome in the nucleolus, many ribosome biogenesis factors, an RNA chaperone and ribosomal proteins associate with the nascent pre-rRNA and work in concert to generate RNA folding, modifications, rearrangements and cleavage as well as targeted degradation of pre-ribosomal RNA by the RNA exosome. This subunit is required for processing of the 5'-external transcribed spacer sequence (5'ETS) of the primary transcript pre-rRNA to yield the 18S rRNA. Also plays a role in maintaining early pre-rRNA levels, either by assisting in its transcription or stability. This is U3 small nucleolar RNA-associated protein NOL7 (Nol7) from Mus musculus (Mouse).